Reading from the N-terminus, the 179-residue chain is Peptide deformylase 2 (179 aa).

Fe cation contacts are provided by Cys-102 and His-144. Residue Glu-145 is part of the active site. Residue His-148 coordinates Fe cation.

The protein belongs to the polypeptide deformylase family. Requires Fe(2+) as cofactor.

The catalysed reaction is N-terminal N-formyl-L-methionyl-[peptide] + H2O = N-terminal L-methionyl-[peptide] + formate. Removes the formyl group from the N-terminal Met of newly synthesized proteins. Requires at least a dipeptide for an efficient rate of reaction. N-terminal L-methionine is a prerequisite for activity but the enzyme has broad specificity at other positions. The polypeptide is Peptide deformylase 2 (Nostoc sp. (strain PCC 7120 / SAG 25.82 / UTEX 2576)).